The chain runs to 416 residues: Serine hydroxymethyltransferase (416 aa).

(6S)-5,6,7,8-tetrahydrofolate-binding positions include Leu121 and 125–127 (GHL). Residue Lys230 is modified to N6-(pyridoxal phosphate)lysine. Residue 355-357 (SPF) coordinates (6S)-5,6,7,8-tetrahydrofolate.

It belongs to the SHMT family. As to quaternary structure, homodimer. It depends on pyridoxal 5'-phosphate as a cofactor.

The protein localises to the cytoplasm. The catalysed reaction is (6R)-5,10-methylene-5,6,7,8-tetrahydrofolate + glycine + H2O = (6S)-5,6,7,8-tetrahydrofolate + L-serine. Its pathway is one-carbon metabolism; tetrahydrofolate interconversion. The protein operates within amino-acid biosynthesis; glycine biosynthesis; glycine from L-serine: step 1/1. Functionally, catalyzes the reversible interconversion of serine and glycine with tetrahydrofolate (THF) serving as the one-carbon carrier. This reaction serves as the major source of one-carbon groups required for the biosynthesis of purines, thymidylate, methionine, and other important biomolecules. Also exhibits THF-independent aldolase activity toward beta-hydroxyamino acids, producing glycine and aldehydes, via a retro-aldol mechanism. This Streptococcus thermophilus (strain CNRZ 1066) protein is Serine hydroxymethyltransferase.